Reading from the N-terminus, the 558-residue chain is T-complex protein 1 subunit eta (558 aa).

The segment at 524 to 558 (VRNPKSEQPKAPPGGLRRGGPQGMAGLAKNARLGK) is disordered.

Belongs to the TCP-1 chaperonin family. In terms of assembly, heterooligomeric complex of about 850 to 900 kDa that forms two stacked rings, 12 to 16 nm in diameter.

It localises to the cytoplasm. In terms of biological role, molecular chaperone; assists the folding of proteins upon ATP hydrolysis. Known to play a role, in vitro, in the folding of actin and tubulin. The sequence is that of T-complex protein 1 subunit eta from Tetrahymena pyriformis.